A 360-amino-acid chain; its full sequence is Dihydroorotate dehydrogenase (quinone) (360 aa).

FMN contacts are provided by residues 67-71 and Thr91; that span reads AGLDK. Residue Lys71 participates in substrate binding. 116–120 is a substrate binding site; that stretch reads NRMGF. 2 residues coordinate FMN: Asn145 and Asn176. Position 176 (Asn176) interacts with substrate. The Nucleophile role is filled by Ser179. Asn181 contributes to the substrate binding site. Positions 222 and 250 each coordinate FMN. 251-252 serves as a coordination point for substrate; it reads NT. Residues Gly272, Gly301, and 322–323 each bind FMN; that span reads YS.

It belongs to the dihydroorotate dehydrogenase family. Type 2 subfamily. Monomer. It depends on FMN as a cofactor.

Its subcellular location is the cell membrane. The enzyme catalyses (S)-dihydroorotate + a quinone = orotate + a quinol. It participates in pyrimidine metabolism; UMP biosynthesis via de novo pathway; orotate from (S)-dihydroorotate (quinone route): step 1/1. Catalyzes the conversion of dihydroorotate to orotate with quinone as electron acceptor. The chain is Dihydroorotate dehydrogenase (quinone) from Deinococcus deserti (strain DSM 17065 / CIP 109153 / LMG 22923 / VCD115).